A 228-amino-acid chain; its full sequence is MQLCIALDLPSQEENLKLLESLVGLPVWIKVGLRSYIRDGKEFLGRIRQIDPRFELFLDLKLHDIPNTMGDAAEEIASLGVGMFTLHASSGGEAMREVAARLARFPRRPLAFAVTALTSFGEEGFREIYNASLESKALDMAMLAAQNGMDGVVCSVFESQRIKSYVAQDFLTLTPGIRPFGEPSGDQKRVADLHEAKSASSDFIVVGRPVYKHPRPREAVEKILEGIA.

Residues Asp-8, Lys-30, 59-68 (DLKLHDIPNT), Thr-118, Arg-178, Gln-187, Gly-207, and Arg-208 contribute to the substrate site. The active-site Proton donor is the Lys-61.

This sequence belongs to the OMP decarboxylase family. Type 1 subfamily. In terms of assembly, homodimer.

It catalyses the reaction orotidine 5'-phosphate + H(+) = UMP + CO2. It participates in pyrimidine metabolism; UMP biosynthesis via de novo pathway; UMP from orotate: step 2/2. Functionally, catalyzes the decarboxylation of orotidine 5'-monophosphate (OMP) to uridine 5'-monophosphate (UMP). In Wolinella succinogenes (strain ATCC 29543 / DSM 1740 / CCUG 13145 / JCM 31913 / LMG 7466 / NCTC 11488 / FDC 602W) (Vibrio succinogenes), this protein is Orotidine 5'-phosphate decarboxylase.